A 436-amino-acid polypeptide reads, in one-letter code: Fasciclin-like arabinogalactan protein 15 (436 aa).

A signal peptide spans 1 to 20 (MDDLSKLLFFLLLTISITTA). FAS1 domains are found at residues 31–165 (NSNS…ERLL) and 249–392 (VKDF…DGVL). 2 N-linked (GlcNAc...) asparagine glycosylation sites follow: Asn68 and Asn271.

This sequence belongs to the fasciclin-like AGP family.

It localises to the secreted. May be a cell surface adhesion protein. The chain is Fasciclin-like arabinogalactan protein 15 (FLA15) from Arabidopsis thaliana (Mouse-ear cress).